The primary structure comprises 494 residues: Ketol-acid reductoisomerase (NADP(+)) (494 aa).

A KARI N-terminal Rossmann domain is found at 14 to 208 (LDQLGRCRFM…GGHRAGVLES (195 aa)). NADP(+) is bound by residues 45 to 48 (CGAQ), Arg68, Arg76, Ser78, and 108 to 110 (DKQ). His132 is a catalytic residue. Gly158 contributes to the NADP(+) binding site. KARI C-terminal knotted domains follow at residues 209 to 344 (SFVA…NYPV) and 345 to 487 (TDVE…MTDM). 4 residues coordinate Mg(2+): Asp217, Glu221, Glu389, and Glu393. Ser414 provides a ligand contact to substrate.

This sequence belongs to the ketol-acid reductoisomerase family. Mg(2+) is required as a cofactor.

It catalyses the reaction (2R)-2,3-dihydroxy-3-methylbutanoate + NADP(+) = (2S)-2-acetolactate + NADPH + H(+). The enzyme catalyses (2R,3R)-2,3-dihydroxy-3-methylpentanoate + NADP(+) = (S)-2-ethyl-2-hydroxy-3-oxobutanoate + NADPH + H(+). The protein operates within amino-acid biosynthesis; L-isoleucine biosynthesis; L-isoleucine from 2-oxobutanoate: step 2/4. It participates in amino-acid biosynthesis; L-valine biosynthesis; L-valine from pyruvate: step 2/4. Involved in the biosynthesis of branched-chain amino acids (BCAA). Catalyzes an alkyl-migration followed by a ketol-acid reduction of (S)-2-acetolactate (S2AL) to yield (R)-2,3-dihydroxy-isovalerate. In the isomerase reaction, S2AL is rearranged via a Mg-dependent methyl migration to produce 3-hydroxy-3-methyl-2-ketobutyrate (HMKB). In the reductase reaction, this 2-ketoacid undergoes a metal-dependent reduction by NADPH to yield (R)-2,3-dihydroxy-isovalerate. This Photobacterium profundum (strain SS9) protein is Ketol-acid reductoisomerase (NADP(+)).